We begin with the raw amino-acid sequence, 50 residues long: uncharacterized protein (50 aa).

A helical membrane pass occupies residues Ile5–Leu19. The stretch at Leu19 to Lys50 forms a coiled coil.

The protein resides in the membrane. This is an uncharacterized protein from Acheta domesticus (House cricket).